Here is a 331-residue protein sequence, read N- to C-terminus: Vitamin B12 import system permease protein BtuC (331 aa).

A run of 9 helical transmembrane segments spans residues isoleucine 20–proline 42, leucine 62–glycine 84, glycine 91–leucine 113, isoleucine 118–alanine 140, arginine 147–phenylalanine 169, alanine 189–cysteine 208, leucine 240–valine 262, tyrosine 277–leucine 299, and leucine 306–valine 325.

This sequence belongs to the binding-protein-dependent transport system permease family. FecCD subfamily. In terms of assembly, the complex is composed of two ATP-binding proteins (BtuD), two transmembrane proteins (BtuC) and a solute-binding protein (BtuF).

It is found in the cell inner membrane. In terms of biological role, part of the ABC transporter complex BtuCDF involved in vitamin B12 import. Involved in the translocation of the substrate across the membrane. The chain is Vitamin B12 import system permease protein BtuC from Vibrio parahaemolyticus serotype O3:K6 (strain RIMD 2210633).